The sequence spans 701 residues: Lutropin-choriogonadotropic hormone receptor (701 aa).

An N-terminal signal peptide occupies residues 1-26 (MGRPSLALRLLLALLLLPPPAPLLWA). The Extracellular portion of the chain corresponds to 27 to 365 (LRPAPCPEPC…EDIMGYNFLR (339 aa)). Asn101 is a glycosylation site (N-linked (GlcNAc...) asparagine). LRR repeat units lie at residues 124–149 (LPRLKYLSICNTGIHKLPDVTKIFSS), 151–173 (FNFILEICDNLHITTIPRNAFQG), 174–198 (MNNESITLKLYGNGFEEIQSHAFNG), 200–222 (TLISLELKENARLEKMHNDAFRG), 223–246 (ATGPSILDISSTKLQALPTYGLES), and 250–271 (LIATSSYSLKKLPSREKFTNLL). Residues Asn176 and Asn197 are each glycosylated (N-linked (GlcNAc...) asparagine). 3 N-linked (GlcNAc...) asparagine glycosylation sites follow: Asn293, Asn301, and Asn315. Tyr333 carries the post-translational modification Sulfotyrosine. The helical transmembrane segment at 366–387 (VLIWLINILAITGNVTVLFVLL) threads the bilayer. Residues 388–397 (TSRYKLTVPR) lie on the Cytoplasmic side of the membrane. Residues 398-418 (FLMCNLSFADFCMGLYLLLIA) traverse the membrane as a helical segment. Over 419–441 (SVDAQTKGQYYNHAIDWQTGSGC) the chain is Extracellular. Residues Cys441 and Cys516 are joined by a disulfide bond. A helical membrane pass occupies residues 442 to 464 (SAAGFFTVFASELSVYTLTVITL). Topologically, residues 465–484 (ERWHTITYAIQLDQKLRLKH) are cytoplasmic. Residues 485 to 507 (AIPVMLGGWLFSTLIAVLPLVGV) form a helical membrane-spanning segment. The Extracellular segment spans residues 508 to 527 (SNYMKVSICLPMDVESTLSQ). The helical transmembrane segment at 528 to 551 (VYILTILILNVMAFIIICACYIKI) threads the bilayer. The Cytoplasmic segment spans residues 552-572 (YFAVQNPELMATNKDTKIAKK). Residues 573–596 (MAVLIFTDFTCMAPISFFAISAAF) traverse the membrane as a helical segment. At 597–607 (KVPLITVTNSK) the chain is on the extracellular side. A helical transmembrane segment spans residues 608–629 (VLLVLFYPVNSCANPFLYAIFT). The Cytoplasmic segment spans residues 630 to 701 (KAFQRDFFLL…VLDKTCYKEC (72 aa)). S-palmitoyl cysteine attachment occurs at residues Cys645 and Cys646.

Belongs to the G-protein coupled receptor 1 family. FSH/LSH/TSH subfamily. Post-translationally, sulfated.

Its subcellular location is the cell membrane. Functionally, receptor for lutropin-choriogonadotropic hormone. The activity of this receptor is mediated by G proteins which activate adenylate cyclase. This Bos taurus (Bovine) protein is Lutropin-choriogonadotropic hormone receptor (LHCGR).